We begin with the raw amino-acid sequence, 353 residues long: UDP-3-O-acylglucosamine N-acyltransferase (353 aa).

The Proton acceptor role is filled by H258.

It belongs to the transferase hexapeptide repeat family. LpxD subfamily. As to quaternary structure, homotrimer.

It carries out the reaction a UDP-3-O-[(3R)-3-hydroxyacyl]-alpha-D-glucosamine + a (3R)-hydroxyacyl-[ACP] = a UDP-2-N,3-O-bis[(3R)-3-hydroxyacyl]-alpha-D-glucosamine + holo-[ACP] + H(+). It functions in the pathway bacterial outer membrane biogenesis; LPS lipid A biosynthesis. In terms of biological role, catalyzes the N-acylation of UDP-3-O-acylglucosamine using 3-hydroxyacyl-ACP as the acyl donor. Is involved in the biosynthesis of lipid A, a phosphorylated glycolipid that anchors the lipopolysaccharide to the outer membrane of the cell. The chain is UDP-3-O-acylglucosamine N-acyltransferase from Parvibaculum lavamentivorans (strain DS-1 / DSM 13023 / NCIMB 13966).